We begin with the raw amino-acid sequence, 457 residues long: Cysteine--tRNA ligase (457 aa).

Cys-30 is a binding site for Zn(2+). Positions 32-42 (PTVYDRAHLGN) match the 'HIGH' region motif. The Zn(2+) site is built by Cys-213, His-238, and Glu-242. The 'KMSKS' region motif lies at 271 to 275 (KMSKS). Residue Lys-274 participates in ATP binding.

It belongs to the class-I aminoacyl-tRNA synthetase family. As to quaternary structure, monomer. The cofactor is Zn(2+).

It localises to the cytoplasm. It carries out the reaction tRNA(Cys) + L-cysteine + ATP = L-cysteinyl-tRNA(Cys) + AMP + diphosphate. This chain is Cysteine--tRNA ligase, found in Ruegeria sp. (strain TM1040) (Silicibacter sp.).